The primary structure comprises 473 residues: Ribosomal RNA small subunit methyltransferase F (473 aa).

S-adenosyl-L-methionine-binding positions include 124 to 130 (ASAPGSK), Glu-148, Asp-175, and Asp-193. Catalysis depends on Cys-246, which acts as the Nucleophile.

This sequence belongs to the class I-like SAM-binding methyltransferase superfamily. RsmB/NOP family.

Its subcellular location is the cytoplasm. It carries out the reaction cytidine(1407) in 16S rRNA + S-adenosyl-L-methionine = 5-methylcytidine(1407) in 16S rRNA + S-adenosyl-L-homocysteine + H(+). In terms of biological role, specifically methylates the cytosine at position 1407 (m5C1407) of 16S rRNA. The chain is Ribosomal RNA small subunit methyltransferase F from Aliivibrio salmonicida (strain LFI1238) (Vibrio salmonicida (strain LFI1238)).